Here is a 248-residue protein sequence, read N- to C-terminus: Eukaryotic translation initiation factor 6 (248 aa).

It belongs to the eIF-6 family. As to quaternary structure, monomer. Associates with the 60S ribosomal subunit.

It localises to the cytoplasm. Its subcellular location is the nucleus. The protein localises to the nucleolus. Binds to the 60S ribosomal subunit and prevents its association with the 40S ribosomal subunit to form the 80S initiation complex in the cytoplasm. May also be involved in ribosome biogenesis. In Trypanosoma cruzi (strain CL Brener), this protein is Eukaryotic translation initiation factor 6.